A 412-amino-acid chain; its full sequence is 46 kDa FK506-binding nuclear protein (412 aa).

3 stretches are compositionally biased toward acidic residues: residues 95 to 113 (EEDL…EEEA), 169 to 178 (GEDIDTDEND), and 188 to 216 (EGDD…EEEE). The segment at 95-304 (EEDLEDEEEA…PVEKKEKKQI (210 aa)) is disordered. The span at 247–257 (KSQKRRLKKKL) shows a compositional bias: basic residues. Basic and acidic residues predominate over residues 271 to 303 (DKPKKEEPQQKAEKKKPEAKKEEAPVEKKEKKQ). A PPIase FKBP-type domain is found at 324–412 (GKVVMVYYEG…VFEVDLKNVK (89 aa)).

Belongs to the FKBP-type PPIase family. In terms of processing, phosphorylated by a nuclear kinase in the presence of Mg(2+) and ATP.

The protein resides in the nucleus. The catalysed reaction is [protein]-peptidylproline (omega=180) = [protein]-peptidylproline (omega=0). Its activity is regulated as follows. Inhibited by both FK506 and rapamycin. In terms of biological role, PPIases accelerate the folding of proteins. It catalyzes the cis-trans isomerization of proline imidic peptide bonds in oligopeptides. Binds double-stranded DNA in vitro. The sequence is that of 46 kDa FK506-binding nuclear protein (FKBP46) from Spodoptera frugiperda (Fall armyworm).